The chain runs to 507 residues: ATP synthase subunit alpha (507 aa).

Position 168-175 (168-175 (GDRKTGKT)) interacts with ATP.

It belongs to the ATPase alpha/beta chains family. In terms of assembly, F-type ATPases have 2 components, CF(1) - the catalytic core - and CF(0) - the membrane proton channel. CF(1) has five subunits: alpha(3), beta(3), gamma(1), delta(1), epsilon(1). CF(0) has three main subunits: a(1), b(2) and c(9-12). The alpha and beta chains form an alternating ring which encloses part of the gamma chain. CF(1) is attached to CF(0) by a central stalk formed by the gamma and epsilon chains, while a peripheral stalk is formed by the delta and b chains.

It is found in the cell inner membrane. It carries out the reaction ATP + H2O + 4 H(+)(in) = ADP + phosphate + 5 H(+)(out). Produces ATP from ADP in the presence of a proton gradient across the membrane. The alpha chain is a regulatory subunit. The sequence is that of ATP synthase subunit alpha from Ehrlichia ruminantium (strain Gardel).